A 417-amino-acid polypeptide reads, in one-letter code: Serpin H1 (417 aa).

An N-terminal signal peptide occupies residues 1 to 17; sequence MRSLLLGTLCLLAVALA. Residue K93 is modified to N6-succinyllysine. N-linked (GlcNAc...) asparagine glycans are attached at residues N119 and N124. S140 is modified (phosphoserine). K206 carries the post-translational modification N6-acetyllysine. At K295 the chain carries N6-succinyllysine. Position 318 is an N6-acetyllysine (K318). Residue N394 is glycosylated (N-linked (GlcNAc...) asparagine). Residues 414-417 carry the Prevents secretion from ER motif; that stretch reads RDEL.

Belongs to the serpin family.

Its subcellular location is the endoplasmic reticulum lumen. Its function is as follows. Binds specifically to collagen. Could be involved as a chaperone in the biosynthetic pathway of collagen. The polypeptide is Serpin H1 (Serpinh1) (Mus musculus (Mouse)).